The following is a 285-amino-acid chain: Glutamate racemase (285 aa).

Residues 30–31 and 62–63 each bind substrate; these read DS and YG. Cysteine 94 functions as the Proton donor/acceptor in the catalytic mechanism. 95–96 is a binding site for substrate; that stretch reads NT. The active-site Proton donor/acceptor is cysteine 206. Residue 207-208 participates in substrate binding; sequence TH.

The protein belongs to the aspartate/glutamate racemases family.

The enzyme catalyses L-glutamate = D-glutamate. It participates in cell wall biogenesis; peptidoglycan biosynthesis. Functionally, provides the (R)-glutamate required for cell wall biosynthesis. The chain is Glutamate racemase from Pectobacterium carotovorum subsp. carotovorum (strain PC1).